Consider the following 146-residue polypeptide: MSASAFNFAFRRFWNSETGPKTVHFWAPTLKWGLVFAGLNDIKRPVEKVSGAQNLSLLATALIWTRWSFVIKPKNYLLASVNFFLGCTAGYHLTRIANFRIRNGDSFKQVIHYIIKGETPAAVAAKQTASTSMNKGVIGTNPPITH.

Residues 1-20 (MSASAFNFAFRRFWNSETGP) constitute a mitochondrion transit peptide. 3 helical membrane-spanning segments follow: residues 23 to 39 (VHFWAPTLKWGLVFAGL), 55 to 71 (LSLLATALIWTRWSFVI), and 78 to 94 (LASVNFFLGCTAGYHLT).

Belongs to the mitochondrial pyruvate carrier (MPC) (TC 2.A.105) family. As to quaternary structure, the functional 150 kDa pyruvate import complex is a heteromer of MPC1 and either MPC2 or MPC3.

The protein resides in the mitochondrion. It is found in the mitochondrion inner membrane. In terms of biological role, mediates the uptake of pyruvate into mitochondria. This chain is Mitochondrial pyruvate carrier 3, found in Saccharomyces cerevisiae (strain ATCC 204508 / S288c) (Baker's yeast).